The sequence spans 637 residues: Chaperone protein HtpG (637 aa).

The interval 1-345 (MSQQETHGFQ…SNDLPLNVSR (345 aa)) is a; substrate-binding. Positions 346–562 (EILQDNHITK…EGEMSSQMIK (217 aa)) are b. Residues 563–637 (LMQAAGQPVP…MNQMLLANLK (75 aa)) are c.

It belongs to the heat shock protein 90 family. Homodimer.

The protein localises to the cytoplasm. Functionally, molecular chaperone. Has ATPase activity. This is Chaperone protein HtpG from Shewanella sp. (strain MR-7).